Here is a 405-residue protein sequence, read N- to C-terminus: Dynactin subunit 2 (405 aa).

Positions Met1–Asp24 are disordered. Coiled coils occupy residues Gln102–Ser125 and Gln379–Lys405.

This sequence belongs to the dynactin subunit 2 family. As to quaternary structure, subunit of dynactin, a multiprotein complex part of a tripartite complex with dynein and a adapter, such as BICDL1, BICD2 or HOOK3. The dynactin complex is built around ACTR1A/ACTB filament and consists of an actin-related filament composed of a shoulder domain, a pointed end and a barbed end. Its length is defined by its flexible shoulder domain. The soulder is composed of 2 DCTN1 subunits, 4 DCTN2 and 2 DCTN3.

It is found in the cytoplasm. It localises to the cytoskeleton. The protein localises to the microtubule organizing center. The protein resides in the centrosome. Its subcellular location is the membrane. In terms of biological role, part of the dynactin complex that activates the molecular motor dynein for ultra-processive transport along microtubules. In the dynactin soulder domain, binds the ACTR1A filament and acts as a molecular ruler to determine the length. Modulates cytoplasmic dynein binding to an organelle, and plays a role in prometaphase chromosome alignment and spindle organization during mitosis. Involved in anchoring microtubules to centrosomes. The sequence is that of Dynactin subunit 2 (dctn2) from Danio rerio (Zebrafish).